A 263-amino-acid chain; its full sequence is uncharacterized protein (263 aa).

A WD repeat occupies 53-89; it reads SAVTASKFSPDGRWLVNLTDQGYVQLWDVHKGERVKT.

This is an uncharacterized protein from Deinococcus radiodurans (strain ATCC 13939 / DSM 20539 / JCM 16871 / CCUG 27074 / LMG 4051 / NBRC 15346 / NCIMB 9279 / VKM B-1422 / R1).